The sequence spans 185 residues: Ribosome-recycling factor (185 aa).

It belongs to the RRF family.

Its subcellular location is the cytoplasm. Its function is as follows. Responsible for the release of ribosomes from messenger RNA at the termination of protein biosynthesis. May increase the efficiency of translation by recycling ribosomes from one round of translation to another. The sequence is that of Ribosome-recycling factor from Nitrosomonas europaea (strain ATCC 19718 / CIP 103999 / KCTC 2705 / NBRC 14298).